Reading from the N-terminus, the 530-residue chain is Glucocorticoid modulatory element-binding protein 2 (530 aa).

The region spanning 81-163 (EEGENLEAEI…RKIMDSGELD (83 aa)) is the SAND domain. Cys110 contacts Zn(2+). The DNA site is built by Lys136, Lys140, Lys143, and Arg154. Lys155 participates in a covalent cross-link: Glycyl lysine isopeptide (Lys-Gly) (interchain with G-Cter in SUMO1); alternate. Lys155 is covalently cross-linked (Glycyl lysine isopeptide (Lys-Gly) (interchain with G-Cter in SUMO2); alternate). Residues His167, Cys171, and Cys175 each contribute to the Zn(2+) site. Coiled-coil stretches lie at residues 245–270 (LLDEVIQEFQQELEETMKGLQQRVQD) and 304–344 (QMDR…SNVL). A Phosphoserine modification is found at Ser373.

Homodimer, and heterodimer of GMEB1 and GMEB2. Interacts with the glucocorticoid receptor (NR3C1). May interact with CREB-binding protein (CBP).

The protein resides in the nucleus. Its subcellular location is the cytoplasm. Its function is as follows. Trans-acting factor that binds to glucocorticoid modulatory elements (GME) present in the TAT (tyrosine aminotransferase) promoter and increases sensitivity to low concentrations of glucocorticoids. Also binds to the transferrin receptor promoter. The sequence is that of Glucocorticoid modulatory element-binding protein 2 (Gmeb2) from Mus musculus (Mouse).